The chain runs to 261 residues: Transmembrane protein 106A (261 aa).

The segment covering 1–10 (MGKAFSQLTS) has biased composition (polar residues). The segment at 1 to 22 (MGKAFSQLTSQKDEDKSILPDN) is disordered. A helical transmembrane segment spans residues 93–113 (LSVFLAVTICLLIFSLTIFFL).

This sequence belongs to the TMEM106 family.

The protein resides in the cell membrane. Its function is as follows. Activates macrophages and polarizes them into M1-like macrophages through the activation of the MAPK and NF-kappaB signaling pathway. Upon activation, up-regulates the expression of CD80, CD86, CD69 and MHC II on macrophages, and induces the release of pro-inflammatory cytokines such as TNF, IL1B, IL6, CCL2 and nitric oxide. May play a role in inhibition of proliferation and migration. This chain is Transmembrane protein 106A (Tmem106a), found in Rattus norvegicus (Rat).